We begin with the raw amino-acid sequence, 424 residues long: Serine--tRNA ligase (424 aa).

230 to 232 contacts L-serine; that stretch reads TAE. 261–263 serves as a coordination point for ATP; that stretch reads RSE. L-serine is bound at residue E284. An ATP-binding site is contributed by 348–351; the sequence is EISS. Position 384 (S384) interacts with L-serine.

The protein belongs to the class-II aminoacyl-tRNA synthetase family. Type-1 seryl-tRNA synthetase subfamily. In terms of assembly, homodimer. The tRNA molecule binds across the dimer.

It localises to the cytoplasm. It carries out the reaction tRNA(Ser) + L-serine + ATP = L-seryl-tRNA(Ser) + AMP + diphosphate + H(+). The enzyme catalyses tRNA(Sec) + L-serine + ATP = L-seryl-tRNA(Sec) + AMP + diphosphate + H(+). It functions in the pathway aminoacyl-tRNA biosynthesis; selenocysteinyl-tRNA(Sec) biosynthesis; L-seryl-tRNA(Sec) from L-serine and tRNA(Sec): step 1/1. Functionally, catalyzes the attachment of serine to tRNA(Ser). Is also able to aminoacylate tRNA(Sec) with serine, to form the misacylated tRNA L-seryl-tRNA(Sec), which will be further converted into selenocysteinyl-tRNA(Sec). The sequence is that of Serine--tRNA ligase from Streptococcus pneumoniae serotype 19F (strain G54).